We begin with the raw amino-acid sequence, 337 residues long: MTCTIVVGGQWGDEGKGKIISYLCKKDNPSIIARGGVGPNAGHTVEVDGEKYGIRMVPTGFPNVNAKLAVGAGVLTDPEVLLKEIQMLEKFNVGERMLVDYRCGIIEETHKELDKSNEHLSKEIGSTGTGCGPANVDRAMRTLKQGKDIESISKYMGDVSKAVNEALEAGDNVLIEGTQGSLLSLFYGSYPYVTSKDTNAASFAADVGVGPTKIDEVVAVFKSYPTRVGEGPFPTEMSVEEAESLGVVEYGTVTGRRRRVGYFDHELAKKVCRLNGATQIAITCLDKYDTECYGITEYEKLSEKGKAFIKEVEEKVGVKVTLISTGPELGQTIDVRK.

Residues 12–18 and 42–44 contribute to the GTP site; these read GDEGKGK and GHT. Residue aspartate 13 is the Proton acceptor of the active site. Residues aspartate 13 and glycine 42 each contribute to the Mg(2+) site. IMP-binding positions include 13–16, 40–43, threonine 127, arginine 141, glutamine 179, threonine 194, and arginine 256; these read DEGK and NAGH. Histidine 43 acts as the Proton donor in catalysis. Residue 252-258 participates in substrate binding; the sequence is TVTGRRR. Residues arginine 258, 284–286, and 324–326 each bind GTP; these read CLD and STG.

It belongs to the adenylosuccinate synthetase family. Homodimer. The cofactor is Mg(2+).

It is found in the cytoplasm. The enzyme catalyses IMP + L-aspartate + GTP = N(6)-(1,2-dicarboxyethyl)-AMP + GDP + phosphate + 2 H(+). It participates in purine metabolism; AMP biosynthesis via de novo pathway; AMP from IMP: step 1/2. Functionally, plays an important role in the de novo pathway of purine nucleotide biosynthesis. Catalyzes the first committed step in the biosynthesis of AMP from IMP. The polypeptide is Adenylosuccinate synthetase (Methanococcus maripaludis (strain C6 / ATCC BAA-1332)).